The primary structure comprises 448 residues: Ribosomal protein uS12 methylthiotransferase RimO (448 aa).

One can recognise an MTTase N-terminal domain in the interval 10–120 (PNIGFVSLGC…VMEHVHKYVP (111 aa)). The [4Fe-4S] cluster site is built by Cys19, Cys55, Cys84, Cys152, Cys156, and Cys159. Positions 138–379 (LTPKHYAYLK…MELQQQISAQ (242 aa)) constitute a Radical SAM core domain. One can recognise a TRAM domain in the interval 382-448 (QQKIGKTLPV…ADEYDLWGTC (67 aa)).

This sequence belongs to the methylthiotransferase family. RimO subfamily. It depends on [4Fe-4S] cluster as a cofactor.

Its subcellular location is the cytoplasm. The enzyme catalyses L-aspartate(89)-[ribosomal protein uS12]-hydrogen + (sulfur carrier)-SH + AH2 + 2 S-adenosyl-L-methionine = 3-methylsulfanyl-L-aspartate(89)-[ribosomal protein uS12]-hydrogen + (sulfur carrier)-H + 5'-deoxyadenosine + L-methionine + A + S-adenosyl-L-homocysteine + 2 H(+). In terms of biological role, catalyzes the methylthiolation of an aspartic acid residue of ribosomal protein uS12. The polypeptide is Ribosomal protein uS12 methylthiotransferase RimO (Mannheimia succiniciproducens (strain KCTC 0769BP / MBEL55E)).